A 975-amino-acid polypeptide reads, in one-letter code: Probable outer membrane protein PmpA (975 aa).

A signal peptide spans 1–51; that stretch reads MNRVIEIHAHYDQRQLSQSPNTNFLVHHPYLTLIPKFLLGALIVYAPYSFA. The Autotransporter domain maps to 699 to 975; it reads RSLIPTSYFG…SLSCGGYVGF (277 aa).

It belongs to the PMP outer membrane protein family.

Its subcellular location is the secreted. It is found in the cell wall. The protein resides in the cell outer membrane. The chain is Probable outer membrane protein PmpA (pmpA) from Chlamydia trachomatis serovar D (strain ATCC VR-885 / DSM 19411 / UW-3/Cx).